The chain runs to 151 residues: Methylglyoxal synthase (151 aa).

The 146-residue stretch at 6–151 (RTMPAHKHVA…DYDAYLAERT (146 aa)) folds into the MGS-like domain. Substrate is bound by residues His19, Lys23, 45-48 (TGTT), and 65-66 (SG). Asp71 serves as the catalytic Proton donor/acceptor. His98 contributes to the substrate binding site.

The protein belongs to the methylglyoxal synthase family.

The catalysed reaction is dihydroxyacetone phosphate = methylglyoxal + phosphate. In terms of biological role, catalyzes the formation of methylglyoxal from dihydroxyacetone phosphate. The chain is Methylglyoxal synthase from Vibrio campbellii (strain ATCC BAA-1116).